Reading from the N-terminus, the 206-residue chain is dTTP/UTP pyrophosphatase (206 aa).

Asp-79 functions as the Proton acceptor in the catalytic mechanism.

This sequence belongs to the Maf family. YhdE subfamily. The cofactor is a divalent metal cation.

It localises to the cytoplasm. It catalyses the reaction dTTP + H2O = dTMP + diphosphate + H(+). It carries out the reaction UTP + H2O = UMP + diphosphate + H(+). Its function is as follows. Nucleoside triphosphate pyrophosphatase that hydrolyzes dTTP and UTP. May have a dual role in cell division arrest and in preventing the incorporation of modified nucleotides into cellular nucleic acids. The polypeptide is dTTP/UTP pyrophosphatase (Rhizobium johnstonii (strain DSM 114642 / LMG 32736 / 3841) (Rhizobium leguminosarum bv. viciae)).